An 88-amino-acid chain; its full sequence is Apolipoprotein C-I (88 aa).

The first 26 residues, 1–26 (MRLFISLPILIVVLAMALEGPAPAQA), serve as a signal peptide directing secretion.

This sequence belongs to the apolipoprotein C1 family.

The protein resides in the secreted. Inhibitor of lipoprotein binding to the low density lipoprotein (LDL) receptor, LDL receptor-related protein, and very low density lipoprotein (VLDL) receptor. Associates with high density lipoproteins (HDL) and the triacylglycerol-rich lipoproteins in the plasma and makes up about 10% of the protein of the VLDL and 2% of that of HDL. Appears to interfere directly with fatty acid uptake and is also the major plasma inhibitor of cholesteryl ester transfer protein (CETP). Modulates the interaction of APOE with beta-migrating VLDL and inhibits binding of beta-VLDL to the LDL receptor-related protein. Binds free fatty acids and reduces their intracellular esterification. This chain is Apolipoprotein C-I (Apoc1), found in Neotoma lepida (Desert woodrat).